Reading from the N-terminus, the 464-residue chain is Glutamate--tRNA ligase (464 aa).

A 'HIGH' region motif is present at residues 10–20; the sequence is PSPTGYLHIGG. Residues 113–130 show a composition bias toward basic and acidic residues; sequence QEAKKEKPRYDGRWRPEA. The tract at residues 113-142 is disordered; the sequence is QEAKKEKPRYDGRWRPEAGKALPVPPTDVP. Residues 242 to 246 carry the 'KMSKS' region motif; it reads KLSKR. ATP is bound at residue K245.

It belongs to the class-I aminoacyl-tRNA synthetase family. Glutamate--tRNA ligase type 1 subfamily. In terms of assembly, monomer.

The protein localises to the cytoplasm. It carries out the reaction tRNA(Glu) + L-glutamate + ATP = L-glutamyl-tRNA(Glu) + AMP + diphosphate. Its function is as follows. Catalyzes the attachment of glutamate to tRNA(Glu) in a two-step reaction: glutamate is first activated by ATP to form Glu-AMP and then transferred to the acceptor end of tRNA(Glu). This Dechloromonas aromatica (strain RCB) protein is Glutamate--tRNA ligase.